The sequence spans 218 residues: Redox-sensing transcriptional repressor Rex (218 aa).

The segment at residues 25-64 is a DNA-binding region (H-T-H motif); that stretch reads WYLSYVQLLHADGCESVSSTRIARAVGVDASLVAKDLSYV. 99–104 is an NAD(+) binding site; it reads GVGSLG.

The protein belongs to the transcriptional regulatory Rex family. In terms of assembly, homodimer.

It localises to the cytoplasm. Its function is as follows. Modulates transcription in response to changes in cellular NADH/NAD(+) redox state. The sequence is that of Redox-sensing transcriptional repressor Rex from Porphyromonas gingivalis (strain ATCC BAA-308 / W83).